The sequence spans 223 residues: GTP cyclohydrolase 1 (223 aa).

Zn(2+) is bound by residues Cys-114, His-117, and Cys-185.

This sequence belongs to the GTP cyclohydrolase I family. Homomer.

The catalysed reaction is GTP + H2O = 7,8-dihydroneopterin 3'-triphosphate + formate + H(+). It participates in cofactor biosynthesis; 7,8-dihydroneopterin triphosphate biosynthesis; 7,8-dihydroneopterin triphosphate from GTP: step 1/1. This is GTP cyclohydrolase 1 from Chlorobium phaeovibrioides (strain DSM 265 / 1930) (Prosthecochloris vibrioformis (strain DSM 265)).